Consider the following 208-residue polypeptide: Holliday junction branch migration complex subunit RuvA (208 aa).

A domain I region spans residues 1 to 69 (MIGFLQGYVV…EDQMVLFGFA (69 aa)). A domain II region spans residues 70-148 (VVAERDLFRQ…EWRDQAGLKT (79 aa)). The interval 149 to 159 (LPSAGPIDSVQ) is flexible linker. The interval 159 to 208 (QEDVEMTLLALGYTSQEVMRALQAVGQNTALAKNSDTEAWIREAIAWLSQ) is domain III.

Belongs to the RuvA family. In terms of assembly, homotetramer. Forms an RuvA(8)-RuvB(12)-Holliday junction (HJ) complex. HJ DNA is sandwiched between 2 RuvA tetramers; dsDNA enters through RuvA and exits via RuvB. An RuvB hexamer assembles on each DNA strand where it exits the tetramer. Each RuvB hexamer is contacted by two RuvA subunits (via domain III) on 2 adjacent RuvB subunits; this complex drives branch migration. In the full resolvosome a probable DNA-RuvA(4)-RuvB(12)-RuvC(2) complex forms which resolves the HJ.

The protein resides in the cytoplasm. The RuvA-RuvB-RuvC complex processes Holliday junction (HJ) DNA during genetic recombination and DNA repair, while the RuvA-RuvB complex plays an important role in the rescue of blocked DNA replication forks via replication fork reversal (RFR). RuvA specifically binds to HJ cruciform DNA, conferring on it an open structure. The RuvB hexamer acts as an ATP-dependent pump, pulling dsDNA into and through the RuvAB complex. HJ branch migration allows RuvC to scan DNA until it finds its consensus sequence, where it cleaves and resolves the cruciform DNA. The chain is Holliday junction branch migration complex subunit RuvA from Acaryochloris marina (strain MBIC 11017).